The primary structure comprises 192 residues: Thymidylate kinase (192 aa).

Residue 7-14 (GIDCVGKS) coordinates ATP.

Belongs to the thymidylate kinase family.

The catalysed reaction is dTMP + ATP = dTDP + ADP. In terms of biological role, phosphorylation of dTMP to form dTDP in both de novo and salvage pathways of dTTP synthesis. In Campylobacter jejuni subsp. doylei (strain ATCC BAA-1458 / RM4099 / 269.97), this protein is Thymidylate kinase.